The following is an 817-amino-acid chain: Protein Jade-3 (817 aa).

Residues 1 to 38 form a disordered region; the sequence is MKRLRNLSSSDSSDNESPSTSFSSCFQHKGKGKCTADD. The segment covering 8-24 has biased composition (low complexity); sequence SSSDSSDNESPSTSFSS. The PHD-type 1 zinc-finger motif lies at 202–252; sequence DVICDVCRSPDSEEGNDMVFCDRCNICVHQACYGILKVPEGSWLCRTCVLG. The segment at 254 to 288 adopts a C2HC pre-PHD-type zinc-finger fold; the sequence is HPQCILCPKTGGAMKATRTGTKWAHVSCALWIPEV. Residues 312–368 form a PHD-type 2 zinc finger; it reads LVCSLCKLKTGACIQCSVKSCITAFHVTCAFEHSLEMKTILDEGDEVKFKSYCLKHS. Disordered stretches follow at residues 375–396, 665–689, and 719–817; these read ISEQ…SERT, NGVL…QNSE, and LVRT…SVQR. Basic and acidic residues predominate over residues 379–396; the sequence is EEPHKTHSDNRPTESERT. Positions 667-689 are enriched in polar residues; that stretch reads VLSSGDRTQRDSSSQTSPGQNSE. Over residues 722 to 743 the composition is skewed to basic and acidic residues; the sequence is TTEDLRSSEKPQRRQSVKERLW. Residues 747–758 are compositionally biased toward polar residues; it reads PADTQTSGTPYQ. Residues 777–799 show a composition bias toward basic and acidic residues; it reads DENKDHMLLRRNSRESPNRDSCR. Residues 801-810 show a composition bias toward basic residues; sequence SRIRGKRKMT.

This sequence belongs to the JADE family. In terms of assembly, component of the HBO1 complex.

Functionally, scaffold subunit of some HBO1 complexes, which have a histone H4 acetyltransferase activity. The chain is Protein Jade-3 (jade3) from Xenopus tropicalis (Western clawed frog).